A 349-amino-acid polypeptide reads, in one-letter code: FK506-binding protein-like (349 aa).

A Phosphothreonine modification is found at Thr3. The tract at residues 36-55 (RQQPRDPPTETLELEVSPDP) is disordered. 3 TPR repeats span residues 210–243 (AREE…LLTL), 252–285 (TVLH…EPGH), and 286–319 (LKAL…DPKN).

As to quaternary structure, forms a ternary complex with CDKN1A/p21 and HSP90AB1/Hsp90. Ubiquitously expressed with higher levels in testis.

Its function is as follows. May be involved in response to X-ray. Regulates p21 protein stability by binding to Hsp90 and p21. The chain is FK506-binding protein-like (FKBPL) from Homo sapiens (Human).